The sequence spans 75 residues: MEKLTILLLVAAVLMSTQALIQRGGAKRRKVNFFSIREPGAEDWREGNCTPWLGGCTSPEECCPGNCETYCRAWR.

The first 19 residues, 1–19, serve as a signal peptide directing secretion; sequence MEKLTILLLVAAVLMSTQA. A propeptide spanning residues 20-45 is cleaved from the precursor; the sequence is LIQRGGAKRRKVNFFSIREPGAEDWR. 3 disulfide bridges follow: Cys49-Cys63, Cys56-Cys67, and Cys62-Cys71.

It belongs to the conotoxin O2 superfamily. As to expression, expressed by the venom duct.

The protein resides in the secreted. The sequence is that of Conotoxin TsMEKL-011 from Conus tessulatus (Tessellate cone).